Here is a 574-residue protein sequence, read N- to C-terminus: Ankyrin repeat protein B18 (574 aa).

6 ANK repeats span residues 56-87, 135-164, 167-213, 217-249, 253-285, and 327-356; these read TGYT…NVTM, IKSR…DPNF, DGYT…NLNA, CGNT…NFKI, HGLT…NVGE, and EGKT…DINA. The 34-residue stretch at 541–574 folds into the F-box domain; sequence NCLLTLLPSEIIYEILYMLTINDLYNISYPPTKV.

The chain is Ankyrin repeat protein B18 from Homo sapiens (Human).